The primary structure comprises 534 residues: EH domain-containing protein 1 (534 aa).

An N-acetylmethionine modification is found at methionine 1. A Dynamin-type G domain is found at 55 to 286 (FDNKPMVLLV…DLFKDIQSLP (232 aa)). The G1 motif stretch occupies residues 65–72 (GQYSTGKT). Residue 65–72 (GQYSTGKT) participates in ATP binding. The G2 motif stretch occupies residues 91-92 (EP). Residues 153 to 156 (DTPG) are G3 motif. Residues 198–227 (DEFSEVIKALKNHEDKIRVVLNKADQIETQ) are a coiled coil. The interval 219–222 (NKAD) is G4 motif. Lysine 220 contributes to the ATP binding site. Isoleucine 243 is a region of interest (G5 motif). Tryptophan 258 is an ATP binding site. Phosphoserine is present on residues serine 355 and serine 456. The 89-residue stretch at 444–532 (DKPTYDEIFY…PHLIPPSKRR (89 aa)) folds into the EH domain. Positions 476–511 (LPNTVLGKIWKLADVDKDGLLDDEEFALANHLIKVK) constitute an EF-hand domain. 4 residues coordinate Ca(2+): aspartate 489, aspartate 491, aspartate 493, and glutamate 500.

The protein belongs to the TRAFAC class dynamin-like GTPase superfamily. Dynamin/Fzo/YdjA family. EHD subfamily. In terms of assembly, homooligomer, and heterooligomer with EHD2, EHD3 and EHD4, ATP-binding is required for heterooligomerization. Interacts (via EH domain) with MICALL1 (via NPF1 motif); the interaction is direct and recruits EHD1 to membranes. Interacts with RAB35; the interaction is indirect through MICALL1 and recruits EHD1 to membranes. Interacts (via EH domain) with PACSIN2 (via NPF motifs); regulates localization to tubular recycling endosome membranes. Interacts with PACSIN1. Interacts with RAB8A. Interacts with FER1L5 (via second C2 domain). Interacts with MYOF. Interacts with ZFYVE20. Interacts (via EH domain) with RAB11FIP2.

Its subcellular location is the recycling endosome membrane. The protein resides in the early endosome membrane. The protein localises to the cell membrane. It is found in the cell projection. It localises to the cilium membrane. Its function is as follows. ATP- and membrane-binding protein that controls membrane reorganization/tubulation upon ATP hydrolysis. In vitro causes vesiculation of endocytic membranes. Acts in early endocytic membrane fusion and membrane trafficking of recycling endosomes. Recruited to endosomal membranes upon nerve growth factor stimulation, indirectly regulates neurite outgrowth. Plays a role in myoblast fusion. Involved in the unidirectional retrograde dendritic transport of endocytosed BACE1 and in efficient sorting of BACE1 to axons implicating a function in neuronal APP processing. Plays a role in the formation of the ciliary vesicle (CV), an early step in cilium biogenesis. Proposed to be required for the fusion of distal appendage vesicles (DAVs) to form the CV by recruiting SNARE complex component SNAP29. Is required for recruitment of transition zone proteins CEP290, RPGRIP1L, TMEM67 and B9D2, and of IFT20 following DAV reorganization before Rab8-dependent ciliary membrane extension. Required for the loss of CCP110 form the mother centriole essential for the maturation of the basal body during ciliogenesis. This chain is EH domain-containing protein 1, found in Rattus norvegicus (Rat).